The chain runs to 159 residues: Transcriptional repressor NrdR (159 aa).

A zinc finger spans residues 3 to 34; it reads CPKCGYNKSSVVDSRQAEEGTTIRRRRECEKC. The ATP-cone domain maps to 49 to 139; the sequence is LLVIKKDGTR…VYKSFKDVDE (91 aa).

The protein belongs to the NrdR family. Zn(2+) serves as cofactor.

In terms of biological role, negatively regulates transcription of bacterial ribonucleotide reductase nrd genes and operons by binding to NrdR-boxes. This chain is Transcriptional repressor NrdR, found in Streptococcus agalactiae serotype Ia (strain ATCC 27591 / A909 / CDC SS700).